The following is a 74-amino-acid chain: Large ribosomal subunit protein bL31 (74 aa).

Zn(2+) contacts are provided by Cys16, Cys18, Cys38, and Cys41.

Belongs to the bacterial ribosomal protein bL31 family. Type A subfamily. As to quaternary structure, part of the 50S ribosomal subunit. Zn(2+) is required as a cofactor.

In terms of biological role, binds the 23S rRNA. This is Large ribosomal subunit protein bL31 from Acinetobacter baylyi (strain ATCC 33305 / BD413 / ADP1).